Here is a 151-residue protein sequence, read N- to C-terminus: Transcriptional repressor NrdR (151 aa).

A zinc finger lies at cysteine 3 to cysteine 34. In terms of domain architecture, ATP-cone spans proline 49–glutamate 139.

It belongs to the NrdR family. Zn(2+) serves as cofactor.

Negatively regulates transcription of bacterial ribonucleotide reductase nrd genes and operons by binding to NrdR-boxes. The polypeptide is Transcriptional repressor NrdR (Psychromonas ingrahamii (strain DSM 17664 / CCUG 51855 / 37)).